The chain runs to 551 residues: Calcium-dependent protein kinase 19 (551 aa).

Residue G2 is the site of N-myristoyl glycine attachment. Residues 12–46 (VKKPTPDISGEQNTEVKSREITPKEQPRQRQPAPR) are disordered. The span at 25-39 (TEVKSREITPKEQPR) shows a compositional bias: basic and acidic residues. The 260-residue stretch at 98 to 357 (YSLGRELGRG…AAQVLEHPWI (260 aa)) folds into the Protein kinase domain. Residues 104–112 (LGRGQFGIT) and K127 each bind ATP. D222 (proton acceptor) is an active-site residue. Position 263 is a phosphoserine (S263). The tract at residues 363–393 (ASDKPIDSAVLSRMKQLRAMNKLKKLAFKFI) is autoinhibitory domain. 4 EF-hand domains span residues 400 to 435 (EELK…LGSR), 436 to 471 (LTET…RFRV), 472 to 507 (ERED…YNMG), and 512 to 542 (IKEI…CSQS). Residues D413, D415, S417, T419, E424, D449, D451, N453, T455, E460, D485, D487, S489, E496, D520, D522, D524, S526, and E531 each coordinate Ca(2+).

Belongs to the protein kinase superfamily. Ser/Thr protein kinase family. CDPK subfamily.

Its subcellular location is the membrane. The enzyme catalyses L-seryl-[protein] + ATP = O-phospho-L-seryl-[protein] + ADP + H(+). It catalyses the reaction L-threonyl-[protein] + ATP = O-phospho-L-threonyl-[protein] + ADP + H(+). Its activity is regulated as follows. Activated by calcium. Autophosphorylation may play an important role in the regulation of the kinase activity. Its function is as follows. May play a role in signal transduction pathways that involve calcium as a second messenger. This is Calcium-dependent protein kinase 19 (CPK19) from Arabidopsis thaliana (Mouse-ear cress).